The sequence spans 109 residues: Large ribosomal subunit protein uL22 (109 aa).

The protein belongs to the universal ribosomal protein uL22 family. In terms of assembly, part of the 50S ribosomal subunit.

Its function is as follows. This protein binds specifically to 23S rRNA; its binding is stimulated by other ribosomal proteins, e.g. L4, L17, and L20. It is important during the early stages of 50S assembly. It makes multiple contacts with different domains of the 23S rRNA in the assembled 50S subunit and ribosome. The globular domain of the protein is located near the polypeptide exit tunnel on the outside of the subunit, while an extended beta-hairpin is found that lines the wall of the exit tunnel in the center of the 70S ribosome. This is Large ribosomal subunit protein uL22 from Herminiimonas arsenicoxydans.